The primary structure comprises 295 residues: Putative enoyl reductase C646.07c (295 aa).

At 1–84 (MSITLSSRGR…KDLGPQIGWR (84 aa)) the chain is on the cytoplasmic side. Residues 85-105 (TVFMIEYLGPLVIHLFFILNY) form a helical membrane-spanning segment. At 106–157 (KWIYRKDYNLCLNQKIAFVLVMLHFMKREYESIFVHRFSLATMPLRNIFKNC) the chain is on the lumenal side. Residues 158 to 178 (AHYHLLSGLFLAYFIYGPWHA) form a helical membrane-spanning segment. Over 179–186 (NDYIKPNH) the chain is Cytoplasmic. A helical membrane pass occupies residues 187 to 207 (LLFLIVGWAFAVLSNFRTHII). The Lumenal portion of the chain corresponds to 208–223 (LRDLRPAGSKKRVIPT). The chain crosses the membrane as a helical span at residues 224–246 (GYGFNLVSFPNYFFESLGWLFFA). Over 247 to 250 (LLTK) the chain is Cytoplasmic. The chain crosses the membrane as a helical span at residues 251 to 268 (SWASWIFLFVGSAQMFVW). At 269-295 (AKKKHARYLKEFPNYPRSRKIMIPFFL) the chain is on the lumenal side.

This sequence belongs to the steroid 5-alpha reductase family.

The protein localises to the endoplasmic reticulum membrane. It catalyses the reaction a (2E)-enoyl-CoA + NADPH + H(+) = a 2,3-saturated acyl-CoA + NADP(+). In Schizosaccharomyces pombe (strain 972 / ATCC 24843) (Fission yeast), this protein is Putative enoyl reductase C646.07c.